The following is an 839-amino-acid chain: Mitochondrial 15S rRNA processing factor CCM1 (839 aa).

The N-terminal 59 residues, 1–59 (MLSLKSRGSWNVLRWIQVPRRTAVIPAKPSPMRRKRRRIKNVSSKDLDLRGIDPQDSRA), are a transit peptide targeting the mitochondrion. PPR repeat units follow at residues 313-347 (NRENYTTVIQFYVKFGVSKQAWDVFDTMKFLSSSH) and 350-384 (DVTTYNSVLHLCNRERDYAKAIDLYEEMLDRQLQP).

This sequence belongs to the CCM1 family. Binds to mitochondrial small subunit 15S rRNA.

It localises to the mitochondrion. In terms of biological role, regulates mitochondrial small subunit maturation by controlling 15S rRNA 5'-end processing. Localizes to the 5' precursor of the 15S rRNA in a position that is subsequently occupied by mS47 in the mature yeast mtSSU. Uses structure and sequence-specific RNA recognition, binding to a single-stranded region of the precursor and specifically recognizing bases -6 to -1. The exchange of Ccm1 for mS47 is coupled to the irreversible removal of precursor rRNA that is accompanied by conformational changes of the mitoribosomal proteins uS5m and mS26. These conformational changes signal completion of 5'-end rRNA processing through protection of the mature 5'-end of the 15S rRNA and stabilization of mS47. The removal of the 5' precursor together with the dissociation of Ccm1 may be catalyzed by the 5'-3' exoribonuclease Pet127. Involved in the specific removal of group I introns in mitochondrial encoded transcripts. The protein is Mitochondrial 15S rRNA processing factor CCM1 (CCM1) of Zygosaccharomyces rouxii (strain ATCC 2623 / CBS 732 / NBRC 1130 / NCYC 568 / NRRL Y-229).